A 369-amino-acid chain; its full sequence is Phosphoribosyl pyrophosphate synthase-associated protein 2 (369 aa).

The residue at position 1 (Met1) is an N-acetylmethionine. At Thr5 the chain carries Phosphothreonine. Ser219, Ser227, and Ser233 each carry phosphoserine.

The protein belongs to the ribose-phosphate pyrophosphokinase family. In terms of assembly, binds to PRPS1 and PRPS2.

Functionally, seems to play a negative regulatory role in 5-phosphoribose 1-diphosphate synthesis. This Pongo abelii (Sumatran orangutan) protein is Phosphoribosyl pyrophosphate synthase-associated protein 2 (PRPSAP2).